Reading from the N-terminus, the 478-residue chain is Trigger factor (478 aa).

In terms of domain architecture, PPIase FKBP-type spans 162–243 (GDFVSIDLSA…VKSIKERELP (82 aa)). The interval 424 to 478 (KDTDGNDIDTTEFFGPSGGAQAEAEGADEADADSDADSDTEADSDTEADEADEAK) is disordered. Residues 448-478 (EGADEADADSDADSDTEADSDTEADEADEAK) show a composition bias toward acidic residues.

This sequence belongs to the FKBP-type PPIase family. Tig subfamily.

The protein resides in the cytoplasm. It catalyses the reaction [protein]-peptidylproline (omega=180) = [protein]-peptidylproline (omega=0). Involved in protein export. Acts as a chaperone by maintaining the newly synthesized protein in an open conformation. Functions as a peptidyl-prolyl cis-trans isomerase. This chain is Trigger factor, found in Mycobacterium sp. (strain KMS).